Consider the following 158-residue polypeptide: Transcription factor BTF3 homolog 4 (158 aa).

Residues 33 to 98 (TADDKKLQSS…AETKQLTEML (66 aa)) enclose the NAC-A/B domain. The tract at residues 125 to 158 (LDNKAPKAEDIDEEDDDVPDLVENFDEASKNEAN) is disordered. Over residues 134 to 150 (DIDEEDDDVPDLVENFD) the composition is skewed to acidic residues.

The protein belongs to the NAC-beta family.

This is Transcription factor BTF3 homolog 4 (btf3l4) from Danio rerio (Zebrafish).